A 343-amino-acid chain; its full sequence is Fructose-1,6-bisphosphatase, cytosolic (343 aa).

Mg(2+)-binding residues include E71, E100, D121, L123, and D124. Substrate-binding positions include 124–127 (DGSS), N215, Y247, Y267, and K277. E283 provides a ligand contact to Mg(2+).

This sequence belongs to the FBPase class 1 family. It depends on Mg(2+) as a cofactor.

Its subcellular location is the cytoplasm. It catalyses the reaction beta-D-fructose 1,6-bisphosphate + H2O = beta-D-fructose 6-phosphate + phosphate. The polypeptide is Fructose-1,6-bisphosphatase, cytosolic (CFBP) (Saccharum hybrid (Sugarcane)).